The chain runs to 888 residues: Probable disease resistance protein At5g63020 (888 aa).

The stretch at Leu22–Gln66 forms a coiled coil. An NB-ARC domain is found at Ala139–Gly442. Gly181–Thr188 contacts ATP. LRR repeat units follow at residues Val512–Pro533, Gln534–Leu555, Met558–Cys580, Ser582–Arg604, and Lys605–Thr627.

Belongs to the disease resistance NB-LRR family.

Functionally, probable disease resistance protein. This Arabidopsis thaliana (Mouse-ear cress) protein is Probable disease resistance protein At5g63020.